Here is a 146-residue protein sequence, read N- to C-terminus: Large ribosomal subunit protein bL21 (146 aa).

The segment at 103–146 (DGKSPTIGPRPKKEKAVEPVEGASDDKPRRAAKKTAAKTAEDAD) is disordered. Basic and acidic residues predominate over residues 116–131 (EKAVEPVEGASDDKPR).

Belongs to the bacterial ribosomal protein bL21 family. As to quaternary structure, part of the 50S ribosomal subunit. Contacts protein L20.

In terms of biological role, this protein binds to 23S rRNA in the presence of protein L20. The polypeptide is Large ribosomal subunit protein bL21 (Nitrobacter winogradskyi (strain ATCC 25391 / DSM 10237 / CIP 104748 / NCIMB 11846 / Nb-255)).